The sequence spans 206 residues: FMN-dependent NADH:quinone oxidoreductase (206 aa).

FMN contacts are provided by residues Ser-15–Ser-17, Met-94–Phe-97, and Thr-138–Gly-141.

The protein belongs to the azoreductase type 1 family. In terms of assembly, homodimer. The cofactor is FMN.

The catalysed reaction is 2 a quinone + NADH + H(+) = 2 a 1,4-benzosemiquinone + NAD(+). It catalyses the reaction N,N-dimethyl-1,4-phenylenediamine + anthranilate + 2 NAD(+) = 2-(4-dimethylaminophenyl)diazenylbenzoate + 2 NADH + 2 H(+). Its function is as follows. Quinone reductase that provides resistance to thiol-specific stress caused by electrophilic quinones. In terms of biological role, also exhibits azoreductase activity. Catalyzes the reductive cleavage of the azo bond in aromatic azo compounds to the corresponding amines. The chain is FMN-dependent NADH:quinone oxidoreductase from Sinorhizobium fredii (strain NBRC 101917 / NGR234).